A 556-amino-acid polypeptide reads, in one-letter code: Phosphomethylpyrimidine synthase (556 aa).

Residues N191, M220, Y249, H285, 305 to 307 (SRG), 346 to 349 (DALR), and E385 each bind substrate. H389 lines the Zn(2+) pocket. Y412 is a binding site for substrate. H453 lines the Zn(2+) pocket. Positions 535, 538, and 543 each coordinate [4Fe-4S] cluster.

Belongs to the ThiC family. [4Fe-4S] cluster is required as a cofactor.

The enzyme catalyses 5-amino-1-(5-phospho-beta-D-ribosyl)imidazole + S-adenosyl-L-methionine = 4-amino-2-methyl-5-(phosphooxymethyl)pyrimidine + CO + 5'-deoxyadenosine + formate + L-methionine + 3 H(+). Its pathway is cofactor biosynthesis; thiamine diphosphate biosynthesis. In terms of biological role, catalyzes the synthesis of the hydroxymethylpyrimidine phosphate (HMP-P) moiety of thiamine from aminoimidazole ribotide (AIR) in a radical S-adenosyl-L-methionine (SAM)-dependent reaction. This is Phosphomethylpyrimidine synthase from Chlorobaculum tepidum (strain ATCC 49652 / DSM 12025 / NBRC 103806 / TLS) (Chlorobium tepidum).